The following is a 330-amino-acid chain: Nitrilase 3 (330 aa).

The 270-residue stretch at 4 to 273 (VKAAAVQISP…EGEVIVDLDF (270 aa)) folds into the CN hydrolase domain. The Proton acceptor role is filled by E44. K128 acts as the Proton donor in catalysis. The active-site Nucleophile is C162. The disordered stretch occupies residues 310–330 (RAAHPVSGAEQGPEDLRTPAA).

Belongs to the carbon-nitrogen hydrolase superfamily. Nitrilase family.

The enzyme catalyses a nitrile + 2 H2O = a carboxylate + NH4(+). Functionally, nitrilases catalyze the mild hydrolytic conversion of organonitriles directly to the corresponding carboxylic acids. The chain is Nitrilase 3 from Unknown prokaryotic organism.